Reading from the N-terminus, the 288-residue chain is Polyketide biosynthesis malonyl CoA-acyl carrier protein transacylase PksC (288 aa).

Active-site residues include Ser-87 and His-193.

Belongs to the FabD family.

It is found in the cytoplasm. It catalyses the reaction holo-[ACP] + malonyl-CoA = malonyl-[ACP] + CoA. It functions in the pathway antibiotic biosynthesis; bacillaene biosynthesis. Involved in some intermediate steps for the synthesis of the antibiotic polyketide bacillaene which is involved in secondary metabolism. It catalyzes the transfer of the malonyl-CoA group to the acyl-carrier-protein AcpK (Mal-AcpK). This Bacillus subtilis (strain 168) protein is Polyketide biosynthesis malonyl CoA-acyl carrier protein transacylase PksC (pksC).